We begin with the raw amino-acid sequence, 247 residues long: Triosephosphate isomerase (247 aa).

10 to 12 contributes to the substrate binding site; it reads NWK. His-92 (electrophile) is an active-site residue. The Proton acceptor role is filled by Glu-164. Residues Gly-170, Ser-209, and 230-231 contribute to the substrate site; that span reads GG.

Belongs to the triosephosphate isomerase family. Homodimer.

It is found in the cytoplasm. It carries out the reaction D-glyceraldehyde 3-phosphate = dihydroxyacetone phosphate. Its pathway is carbohydrate biosynthesis; gluconeogenesis. It functions in the pathway carbohydrate degradation; glycolysis; D-glyceraldehyde 3-phosphate from glycerone phosphate: step 1/1. Involved in the gluconeogenesis. Catalyzes stereospecifically the conversion of dihydroxyacetone phosphate (DHAP) to D-glyceraldehyde-3-phosphate (G3P). This Alcanivorax borkumensis (strain ATCC 700651 / DSM 11573 / NCIMB 13689 / SK2) protein is Triosephosphate isomerase.